Here is a 393-residue protein sequence, read N- to C-terminus: Putative cytochrome P450 143 (393 aa).

A heme-binding site is contributed by Cys-342.

This sequence belongs to the cytochrome P450 family. It depends on heme as a cofactor.

The protein is Putative cytochrome P450 143 (cyp143) of Mycobacterium bovis (strain ATCC BAA-935 / AF2122/97).